Consider the following 95-residue polypeptide: Large ribosomal subunit protein bL27 (95 aa).

A propeptide spanning residues 1 to 6 is cleaved from the precursor; sequence MKLQLF. The interval 1 to 25 is disordered; the sequence is MKLQLFAHKKGVGSSRNGRDSESKR.

Belongs to the bacterial ribosomal protein bL27 family. In terms of processing, the N-terminus is cleaved by ribosomal processing cysteine protease Prp.

The chain is Large ribosomal subunit protein bL27 from Thermoanaerobacter pseudethanolicus (strain ATCC 33223 / 39E) (Clostridium thermohydrosulfuricum).